A 706-amino-acid chain; its full sequence is Ribosomal RNA large subunit methyltransferase K/L (706 aa).

Residues 43–154 form the THUMP domain; the sequence is LMYQSLLWSR…RDMASVALDL (112 aa).

This sequence belongs to the methyltransferase superfamily. RlmKL family.

The protein localises to the cytoplasm. It catalyses the reaction guanosine(2445) in 23S rRNA + S-adenosyl-L-methionine = N(2)-methylguanosine(2445) in 23S rRNA + S-adenosyl-L-homocysteine + H(+). It carries out the reaction guanosine(2069) in 23S rRNA + S-adenosyl-L-methionine = N(2)-methylguanosine(2069) in 23S rRNA + S-adenosyl-L-homocysteine + H(+). Specifically methylates the guanine in position 2445 (m2G2445) and the guanine in position 2069 (m7G2069) of 23S rRNA. The protein is Ribosomal RNA large subunit methyltransferase K/L of Yersinia pestis (strain Pestoides F).